The primary structure comprises 243 residues: Sec-independent protein translocase protein TatC (243 aa).

The next 7 helical transmembrane spans lie at 18 to 38 (VIIISVIAIVIGSIIAYNYVD), 70 to 90 (IAIILGIILASPIILWQIWSF), 106 to 126 (MIPVIIILFVAGIVFAFFTVF), 132 to 152 (FLLQFGGDIMSPMITIGKYIS), 153 to 173 (FALNFLIPFGLVFELPVVVYI), 191 to 211 (YALLVVFILAAALTPGPDVIS), and 213 to 233 (LLMAAPLLILYEVSIFIAKFI).

Belongs to the TatC family. In terms of assembly, forms a complex with TatA.

The protein localises to the cell membrane. In terms of biological role, part of the twin-arginine translocation (Tat) system that transports large folded proteins containing a characteristic twin-arginine motif in their signal peptide across membranes. This is Sec-independent protein translocase protein TatC from Carboxydothermus hydrogenoformans (strain ATCC BAA-161 / DSM 6008 / Z-2901).